The primary structure comprises 128 residues: Ribonuclease pancreatic (128 aa).

The disordered stretch occupies residues K1–Y25. 2 residues coordinate substrate: K7 and R10. Residue H12 is the Proton acceptor of the active site. A compositionally biased stretch (polar residues) spans D14–Y25. Cystine bridges form between C26/C84, C40/C95, C58/C110, and C65/C72. N34 carries N-linked (GlcNAc...) asparagine glycosylation. Substrate-binding positions include K41 to T45, K66, and R85. H119 acts as the Proton donor in catalysis.

The protein belongs to the pancreatic ribonuclease family. As to quaternary structure, monomer. Interacts with and forms tight 1:1 complexes with RNH1. Dimerization of two such complexes may occur. Interaction with RNH1 inhibits this protein. As to expression, pancreas.

The protein resides in the secreted. The catalysed reaction is an [RNA] containing cytidine + H2O = an [RNA]-3'-cytidine-3'-phosphate + a 5'-hydroxy-ribonucleotide-3'-[RNA].. It carries out the reaction an [RNA] containing uridine + H2O = an [RNA]-3'-uridine-3'-phosphate + a 5'-hydroxy-ribonucleotide-3'-[RNA].. Functionally, endonuclease that catalyzes the cleavage of RNA on the 3' side of pyrimidine nucleotides. Acts on single-stranded and double-stranded RNA. The protein is Ribonuclease pancreatic (RNASE1) of Proechimys guairae (Guaira spiny rat).